Reading from the N-terminus, the 321-residue chain is Beta-porphyranase B (321 aa).

The signal sequence occupies residues 1–20; it reads MRKTVLYLSAASLFLSSYTL. Residues 31–319 enclose the GH16 domain; sequence EHIKNLPEAP…WVRAYKLVPI (289 aa). Residues tryptophan 72, arginine 76, glutamate 173, glutamate 178, and glutamate 284 each contribute to the substrate site. The active-site Nucleophile is the glutamate 173. The active-site Proton donor is the glutamate 178.

Belongs to the glycosyl hydrolase 16 family.

It catalyses the reaction Hydrolysis of beta-D-galactopyranose-(1-&gt;4)-alpha-L-galactopyranose-6-sulfate linkages in porphyran.. Its function is as follows. Cleaves the sulfated polysaccharide porphyran at the (1-&gt;4) linkages between beta-D-galactopyranose and alpha-L-galactopyranose-6-sulfate, forming mostly the disaccharide alpha-L-galactopyranose-6-sulfate-(1-&gt;3)-beta-D-galactose. Some longer oligosaccharides of even number of residues are also observed. Inactive on the non-sulfated agarose portion of the porphyran backbone. The sequence is that of Beta-porphyranase B from Phocaeicola plebeius (strain DSM 17135 / JCM 12973 / CCUG 54634 / M2) (Bacteroides plebeius).